An 80-amino-acid chain; its full sequence is Pancreatic polypeptide (80 aa).

A signal peptide spans 1–25 (MPPRWASLLLLACSLLLLAVPPGTA). Tyr-61 is subject to Tyrosine amide. A propeptide spanning residues 65 to 80 (SSSRVLCEEPMGAAGC) is cleaved from the precursor.

The protein belongs to the NPY family.

The protein resides in the secreted. Functionally, hormone secreted by pancreatic cells that acts as a regulator of pancreatic and gastrointestinal functions. The chain is Pancreatic polypeptide (PPY) from Gallus gallus (Chicken).